A 579-amino-acid chain; its full sequence is Probable cytochrome c biosynthesis protein (579 aa).

It belongs to the CcmF/CycK/Ccl1/NrfE/CcsA family.

It localises to the mitochondrion. Its function is as follows. Could be involved in assembly and maturation of cytochromes c. May play a role in guidance of apocytochromes and heme groups for the covalent linkage introduced by the cytochrome-c-heme lyase. The protein is Probable cytochrome c biosynthesis protein of Daucus carota (Wild carrot).